The primary structure comprises 91 residues: Probable Fe(2+)-trafficking protein (91 aa).

The protein belongs to the Fe(2+)-trafficking protein family.

Functionally, could be a mediator in iron transactions between iron acquisition and iron-requiring processes, such as synthesis and/or repair of Fe-S clusters in biosynthetic enzymes. In Ralstonia nicotianae (strain ATCC BAA-1114 / GMI1000) (Ralstonia solanacearum), this protein is Probable Fe(2+)-trafficking protein.